We begin with the raw amino-acid sequence, 623 residues long: Putative disease resistance protein At5g47280 (623 aa).

NB-ARC domains lie at 2–51 and 119–249; these read LFNL…VSQS and VDPR…NMLV. 16–23 lines the ATP pocket; the sequence is GMIGSGKT. LRR repeat units follow at residues 488–511, 512–534, 536–558, and 560–581; these read SLNS…SKLQ, ALQL…ICEL, RLVY…IGNV, and TLEK…AVSL.

This sequence belongs to the disease resistance NB-LRR family.

Its function is as follows. Potential disease resistance protein. In Arabidopsis thaliana (Mouse-ear cress), this protein is Putative disease resistance protein At5g47280.